An 848-amino-acid chain; its full sequence is Aryl hydrocarbon receptor (848 aa).

Positions 1–9 (MSSGANITY) are excised as a propeptide. Positions 1–38 (MSSGANITYASRKRRKPVQKTVKPIPAEGIKSNPSKRH) are disordered. 2 consecutive short sequence motifs (nuclear localization signal) follow at residues 12–15 (RKRR) and 36–41 (KRHRDR). Residues 26–79 (PAEGIKSNPSKRHRDRLNTELDRLASLLPFPQDVINKLDKLSVLRLSVSYLRAK) enclose the bHLH domain. A DNA-binding region spans residues 37–65 (RHRDRLNTELDRLASLLPFPQDVINKLDK). 3 required for maintaining the overall integrity of the AHR:ARNT heterodimer and its transcriptional activity regions span residues 49–81 (LASLLPFPQDVINKLDKLSVLRLSVSYLRAKSF), 116–124 (LLQALNGFV), and 260–262 (FAI). The Nuclear export signal motif lies at 63–71 (LDKLSVLRL). Positions 116–179 (LLQALNGFVL…RQLHWALNPD (64 aa)) constitute a PAS 1 domain. The PAS 2 domain occupies 269–336 (PSILEIRTKN…CAESHIRMIK (68 aa)). The PAC domain occupies 342 to 380 (MTVFRLFAKHSRWRWVQSNARLIYRNGRPDYIIATQRPL). The interval 421-449 (LPIRTKSNTSRKDWAPQSTPSKDSFHPSS) is disordered. Polar residues predominate over residues 436-449 (PQSTPSKDSFHPSS).

As to quaternary structure, homodimer. Heterodimer; efficient DNA binding requires dimerization with another bHLH protein. Interacts with ARNT; the heterodimer ARNT:AHR binds to core DNA sequence 5'-TGCGTG-3' within the dioxin response element (DRE) of target gene promoters and activates their transcription. Binds MYBBP1A. Interacts with coactivators including SRC-1, RIP140 and NOCA7, and with the corepressor SMRT. Interacts with NEDD8 and IVNS1ABP. Interacts with BMAL1. Interacts with HSP90AB1. Interacts with TIPARP; leading to mono-ADP-ribosylation of AHR and subsequent inhibition of AHR. Post-translationally, mono-ADP-ribosylated, leading to inhibit transcription activator activity of AHR. As to expression, expressed in all tissues tested including brain, heart, kidney, liver, lung, muscle, ovary, skin, spleen and thymus.

Its subcellular location is the cytoplasm. It localises to the nucleus. In terms of biological role, ligand-activated transcription factor that enables cells to adapt to changing conditions by sensing compounds from the environment, diet, microbiome and cellular metabolism, and which plays important roles in development, immunity and cancer. Upon ligand binding, translocates into the nucleus, where it heterodimerizes with ARNT and induces transcription by binding to xenobiotic response elements (XRE). Regulates a variety of biological processes, including angiogenesis, hematopoiesis, drug and lipid metabolism, cell motility and immune modulation. Xenobiotics can act as ligands: upon xenobiotic-binding, activates the expression of multiple phase I and II xenobiotic chemical metabolizing enzyme genes (such as the CYP1A1 gene). Mediates biochemical and toxic effects of halogenated aromatic hydrocarbons. Next to xenobiotics, natural ligands derived from plants, microbiota, and endogenous metabolism are potent AHR agonists. Tryptophan (Trp) derivatives constitute an important class of endogenous AHR ligands. Acts as a negative regulator of anti-tumor immunity: indoles and kynurenic acid generated by Trp catabolism act as ligand and activate AHR, thereby promoting AHR-driven cancer cell motility and suppressing adaptive immunity. Regulates the circadian clock by inhibiting the basal and circadian expression of the core circadian component PER1. Inhibits PER1 by repressing the CLOCK-BMAL1 heterodimer mediated transcriptional activation of PER1. The heterodimer ARNT:AHR binds to core DNA sequence 5'-TGCGTG-3' within the dioxin response element (DRE) of target gene promoters and activates their transcription. The sequence is that of Aryl hydrocarbon receptor (Ahr) from Mus musculus (Mouse).